A 232-amino-acid chain; its full sequence is Ribose-5-phosphate isomerase A (232 aa).

Residues 28–31 (TGST), 83–86 (DGAD), and 96–99 (KGGG) each bind substrate. Glutamate 105 acts as the Proton acceptor in catalysis. Lysine 123 is a substrate binding site.

This sequence belongs to the ribose 5-phosphate isomerase family. As to quaternary structure, homodimer.

The catalysed reaction is aldehydo-D-ribose 5-phosphate = D-ribulose 5-phosphate. It participates in carbohydrate degradation; pentose phosphate pathway; D-ribose 5-phosphate from D-ribulose 5-phosphate (non-oxidative stage): step 1/1. Its function is as follows. Catalyzes the reversible conversion of ribose-5-phosphate to ribulose 5-phosphate. In Rhizobium etli (strain CIAT 652), this protein is Ribose-5-phosphate isomerase A.